We begin with the raw amino-acid sequence, 413 residues long: Serine hydroxymethyltransferase (413 aa).

(6S)-5,6,7,8-tetrahydrofolate-binding positions include Leu120 and 124–126 (GHL). An N6-(pyridoxal phosphate)lysine modification is found at Lys229. 352–354 (SPF) provides a ligand contact to (6S)-5,6,7,8-tetrahydrofolate.

This sequence belongs to the SHMT family. In terms of assembly, homodimer. Pyridoxal 5'-phosphate serves as cofactor.

The protein resides in the cytoplasm. The catalysed reaction is (6R)-5,10-methylene-5,6,7,8-tetrahydrofolate + glycine + H2O = (6S)-5,6,7,8-tetrahydrofolate + L-serine. Its pathway is one-carbon metabolism; tetrahydrofolate interconversion. It participates in amino-acid biosynthesis; glycine biosynthesis; glycine from L-serine: step 1/1. Catalyzes the reversible interconversion of serine and glycine with tetrahydrofolate (THF) serving as the one-carbon carrier. This reaction serves as the major source of one-carbon groups required for the biosynthesis of purines, thymidylate, methionine, and other important biomolecules. Also exhibits THF-independent aldolase activity toward beta-hydroxyamino acids, producing glycine and aldehydes, via a retro-aldol mechanism. This Heliobacterium modesticaldum (strain ATCC 51547 / Ice1) protein is Serine hydroxymethyltransferase.